The following is a 429-amino-acid chain: Uterine milk protein (429 aa).

Positions 1–25 are cleaved as a signal peptide; sequence MSHRRMQLALSLVFILCGLFNSIFC. N-linked (GlcNAc...) asparagine glycosylation is found at N222 and N268.

The protein belongs to the serpin family. UTMP subfamily. In terms of processing, glycosylated; carries the so-called mannose 6-phosphate lysosomal recognition marker on its carbohydrate chains. In terms of tissue distribution, secreted by ovine endometrium under the influence of progesterone.

The chain is Uterine milk protein from Ovis aries (Sheep).